Here is a 157-residue protein sequence, read N- to C-terminus: Urease accessory protein UreE (157 aa).

This sequence belongs to the UreE family.

Its subcellular location is the cytoplasm. Its function is as follows. Involved in urease metallocenter assembly. Binds nickel. Probably functions as a nickel donor during metallocenter assembly. This Paenarthrobacter aurescens (strain TC1) protein is Urease accessory protein UreE.